The sequence spans 449 residues: Tubulin beta chain (449 aa).

GTP contacts are provided by Q11, E71, S140, G144, T145, G146, N206, and N228. E71 lines the Mg(2+) pocket.

The protein belongs to the tubulin family. Dimer of alpha and beta chains. A typical microtubule is a hollow water-filled tube with an outer diameter of 25 nm and an inner diameter of 15 nM. Alpha-beta heterodimers associate head-to-tail to form protofilaments running lengthwise along the microtubule wall with the beta-tubulin subunit facing the microtubule plus end conferring a structural polarity. Microtubules usually have 13 protofilaments but different protofilament numbers can be found in some organisms and specialized cells. It depends on Mg(2+) as a cofactor.

The protein localises to the cytoplasm. Its subcellular location is the cytoskeleton. Its function is as follows. Tubulin is the major constituent of microtubules, a cylinder consisting of laterally associated linear protofilaments composed of alpha- and beta-tubulin heterodimers. Microtubules grow by the addition of GTP-tubulin dimers to the microtubule end, where a stabilizing cap forms. Below the cap, tubulin dimers are in GDP-bound state, owing to GTPase activity of alpha-tubulin. This chain is Tubulin beta chain (TUBB), found in Cicer arietinum (Chickpea).